We begin with the raw amino-acid sequence, 213 residues long: uncharacterized protein (213 aa).

This is an uncharacterized protein from Bacillus subtilis (strain 168).